A 706-amino-acid polypeptide reads, in one-letter code: Probable serine/threonine-protein kinase zyg-1 (706 aa).

The region spanning 13 to 249 (YSHLKEIGKG…LTQIVLSEFM (237 aa)) is the Protein kinase domain. Residues 19–27 (IGKGGFGVV) and Lys41 each bind ATP. Asp131 acts as the Proton acceptor in catalysis. Composition is skewed to basic and acidic residues over residues 261 to 290 (SREHSRDGRRQRSREPVRSSRDDRSRDGRA) and 323 to 336 (FDSERGRERDRDSG). 2 disordered regions span residues 261 to 351 (SREH…NRSQ) and 566 to 632 (SPSS…VAPS). Low complexity predominate over residues 566–579 (SPSSLMPSGSSQTS). 2 stretches are compositionally biased toward polar residues: residues 580-592 (RFPFSNLSNNQPS) and 603-629 (KPTSSQRASSANVQRRVSTDENSSPSV).

It belongs to the protein kinase superfamily. Ser/Thr protein kinase family. Interacts with sel-10. In terms of processing, probably ubiquitinated by the SCF(sel-10) and SCF(lin-23) E3 ubiquitin ligase complexes, leading to its proteasomal degradation.

The protein resides in the cytoplasm. It localises to the cytoskeleton. It is found in the microtubule organizing center. The protein localises to the centrosome. Its subcellular location is the centriole. It carries out the reaction L-seryl-[protein] + ATP = O-phospho-L-seryl-[protein] + ADP + H(+). The catalysed reaction is L-threonyl-[protein] + ATP = O-phospho-L-threonyl-[protein] + ADP + H(+). Protein kinase that plays a central role in centrosome duplication, control of centrosome size, spindle formation and nuclear envelope breakdown during cell divisions. Paternal copy is required to regulate synthesis of daughter centrioles prior to fertilization. Maternal copy regulates centrosome duplication during later cell cycles. Functions upstream of sas-5 and sas-6, and is required for their localization to the centrosome. Its role in nuclear envelope breakdown is mediated by the spindly-like protein spdl-1 and the RZZ complex, which in turn recruits the spindle checkpoint proteins mdf-1 and mdf-2, dynein and dynactin to unattached kinetochores. This is Probable serine/threonine-protein kinase zyg-1 from Caenorhabditis elegans.